The sequence spans 360 residues: GDSL esterase/lipase At1g58430 (360 aa).

The first 23 residues, 1 to 23 (MWTSKTISFTLFITTTLLGSCNA), serve as a signal peptide directing secretion. Residue N22 is glycosylated (N-linked (GlcNAc...) asparagine). The active-site Nucleophile is the S42. 2 N-linked (GlcNAc...) asparagine glycosylation sites follow: N104 and N326. Residues D334 and H337 contribute to the active site.

It belongs to the 'GDSL' lipolytic enzyme family.

The protein resides in the secreted. In Arabidopsis thaliana (Mouse-ear cress), this protein is GDSL esterase/lipase At1g58430.